The chain runs to 68 residues: Beta-toxin Im-2 (68 aa).

One can recognise an LCN-type CS-alpha/beta domain in the interval 1 to 67 (KDGYPMVRAG…VWTYEKNTCK (67 aa)). Intrachain disulfides connect cysteine 15-cysteine 66, cysteine 19-cysteine 40, cysteine 26-cysteine 47, and cysteine 30-cysteine 49.

The protein belongs to the long (4 C-C) scorpion toxin superfamily. Sodium channel inhibitor family. Beta subfamily. As to expression, expressed by the venom gland.

The protein resides in the secreted. In terms of biological role, beta toxins bind voltage-independently at site-4 of sodium channels (Nav) and shift the voltage of activation toward more negative potentials thereby affecting sodium channel activation and promoting spontaneous and repetitive firing. Is toxic to both insect and mammals. Induces paralysis in Acheta domestica crickets, but does not induce death, whereas intracerebroventricular injection into mice causes immediate death (at a dose of 0.05 ug/g). The protein is Beta-toxin Im-2 of Isometrus maculatus (Lesser brown scorpion).